The sequence spans 635 residues: Threonine--tRNA ligase (635 aa).

One can recognise a TGS domain in the interval 1–61 (MVSIRLPDGS…DHDVALAIVT (61 aa)). Residues 242 to 533 (DHRKLGKQLD…LIEHHAGAMP (292 aa)) form a catalytic region. Zn(2+) is bound by residues cysteine 333, histidine 384, and histidine 510.

The protein belongs to the class-II aminoacyl-tRNA synthetase family. Homodimer. It depends on Zn(2+) as a cofactor.

The protein resides in the cytoplasm. The enzyme catalyses tRNA(Thr) + L-threonine + ATP = L-threonyl-tRNA(Thr) + AMP + diphosphate + H(+). Its function is as follows. Catalyzes the attachment of threonine to tRNA(Thr) in a two-step reaction: L-threonine is first activated by ATP to form Thr-AMP and then transferred to the acceptor end of tRNA(Thr). Also edits incorrectly charged L-seryl-tRNA(Thr). The sequence is that of Threonine--tRNA ligase from Paraburkholderia xenovorans (strain LB400).